The following is a 190-amino-acid chain: MAENYTPRLKSRYQDEIRPNLQTQFEFSNVMQIPGVTKVVVNMGVGDAARDSKMINGALEDLTAITGQKPQLRRAKKSIANFKLREGMPIGAKVTLRGDRMWEFLDRLLTVALPRIRDFRGLSDQQFDGHGNYTFGLTEQTMFYEIDVDKIDRPRGMDITVVTTAVTDDEGRALLRELGFPFKGEDGKKQ.

The protein belongs to the universal ribosomal protein uL5 family. Part of the 50S ribosomal subunit; part of the 5S rRNA/L5/L18/L25 subcomplex. Contacts the 5S rRNA and the P site tRNA. Forms a bridge to the 30S subunit in the 70S ribosome.

Functionally, this is one of the proteins that bind and probably mediate the attachment of the 5S RNA into the large ribosomal subunit, where it forms part of the central protuberance. In the 70S ribosome it contacts protein S13 of the 30S subunit (bridge B1b), connecting the 2 subunits; this bridge is implicated in subunit movement. Contacts the P site tRNA; the 5S rRNA and some of its associated proteins might help stabilize positioning of ribosome-bound tRNAs. This is Large ribosomal subunit protein uL5 from Corynebacterium efficiens (strain DSM 44549 / YS-314 / AJ 12310 / JCM 11189 / NBRC 100395).